The sequence spans 398 residues: MTMMMSDLPNDLVEEILSRVPITSLGAVRSTCKRWNGLSKDRIVCKGDANQQFTGFTRYVNESTVCSMRLDLNEIQNEDVELVELSINKINKFIELELFQVYYSDGLLLLVTDEVDSKIVVWNPYLGQTRLIQCRDTEHFKYRYALGYDNNRNHKILMYNRKNCEIYDFKSDSWKVLDIIPDLHTNIYVRDMSIKGNTYFFYRGEKIGEGLAGCLLSFDFTRERFVSCLPLPFQIAKFDDNVALSSVREEHLVVLFNNWEESEMEIWVTTKIEPNAVSWSNFLTFTHFRIKFLVTSFFIDQEKKLAVVFGRSLSKQMRCNIAYVIGDNGYLRILDFGVTFIPSNLPVSYAPSLVKITQGQELSVIEEKKRSRLLASLVYSTLFVSFIIFFSFISSVFI.

One can recognise an F-box domain in the interval 2–56 (TMMMSDLPNDLVEEILSRVPITSLGAVRSTCKRWNGLSKDRIVCKGDANQQFTGF).

This Arabidopsis thaliana (Mouse-ear cress) protein is Putative F-box protein At1g67450.